The following is a 229-amino-acid chain: Internal virion protein gp7 (229 aa).

Positions Met1–Glu20 are cleaved as a propeptide — removed in mature form.

The protein belongs to the podoviruses gp7 family. As to quaternary structure, interacts with the internal virion protein gp20; this interaction forms a tube-like structure that may allow DNA ejection through the host membranes.

The protein resides in the virion. Inner capsid protein that plays a role in viral DNA ejection into the host cell. Assembles into an extracellular trans-envelope channel completed by the internal virion proteins gp7 and probably gp16. This channel allows the delivery of the viral genome into the cell cytoplasm. Displays membrane-association properties, may therefore form a simple channel spanning the outer membrane. This Salmonella phage P22 (Bacteriophage P22) protein is Internal virion protein gp7 (7).